Consider the following 346-residue polypeptide: Tetraacyldisaccharide 4'-kinase (346 aa).

An ATP-binding site is contributed by 62–69 (TAGGTGKT).

The protein belongs to the LpxK family.

The catalysed reaction is a lipid A disaccharide + ATP = a lipid IVA + ADP + H(+). It functions in the pathway glycolipid biosynthesis; lipid IV(A) biosynthesis; lipid IV(A) from (3R)-3-hydroxytetradecanoyl-[acyl-carrier-protein] and UDP-N-acetyl-alpha-D-glucosamine: step 6/6. Transfers the gamma-phosphate of ATP to the 4'-position of a tetraacyldisaccharide 1-phosphate intermediate (termed DS-1-P) to form tetraacyldisaccharide 1,4'-bis-phosphate (lipid IVA). The protein is Tetraacyldisaccharide 4'-kinase of Xanthomonas oryzae pv. oryzae (strain MAFF 311018).